The sequence spans 211 residues: Ribosomal RNA large subunit methyltransferase E (211 aa).

Residues glycine 55, tryptophan 57, aspartate 75, aspartate 93, and aspartate 117 each coordinate S-adenosyl-L-methionine. The Proton acceptor role is filled by lysine 157.

This sequence belongs to the class I-like SAM-binding methyltransferase superfamily. RNA methyltransferase RlmE family.

It localises to the cytoplasm. It catalyses the reaction uridine(2552) in 23S rRNA + S-adenosyl-L-methionine = 2'-O-methyluridine(2552) in 23S rRNA + S-adenosyl-L-homocysteine + H(+). Functionally, specifically methylates the uridine in position 2552 of 23S rRNA at the 2'-O position of the ribose in the fully assembled 50S ribosomal subunit. This chain is Ribosomal RNA large subunit methyltransferase E, found in Methanothermobacter thermautotrophicus (strain ATCC 29096 / DSM 1053 / JCM 10044 / NBRC 100330 / Delta H) (Methanobacterium thermoautotrophicum).